The chain runs to 295 residues: Pyridoxal 5'-phosphate synthase subunit PdxS (295 aa).

Position 25 (Asp25) interacts with D-ribose 5-phosphate. Lys82 functions as the Schiff-base intermediate with D-ribose 5-phosphate in the catalytic mechanism. Gly154 contacts D-ribose 5-phosphate. D-glyceraldehyde 3-phosphate is bound at residue Arg166. Residues Gly215 and 236–237 (GS) contribute to the D-ribose 5-phosphate site.

Belongs to the PdxS/SNZ family. In terms of assembly, in the presence of PdxT, forms a dodecamer of heterodimers.

It catalyses the reaction aldehydo-D-ribose 5-phosphate + D-glyceraldehyde 3-phosphate + L-glutamine = pyridoxal 5'-phosphate + L-glutamate + phosphate + 3 H2O + H(+). The protein operates within cofactor biosynthesis; pyridoxal 5'-phosphate biosynthesis. Functionally, catalyzes the formation of pyridoxal 5'-phosphate from ribose 5-phosphate (RBP), glyceraldehyde 3-phosphate (G3P) and ammonia. The ammonia is provided by the PdxT subunit. Can also use ribulose 5-phosphate and dihydroxyacetone phosphate as substrates, resulting from enzyme-catalyzed isomerization of RBP and G3P, respectively. This chain is Pyridoxal 5'-phosphate synthase subunit PdxS, found in Dictyoglomus turgidum (strain DSM 6724 / Z-1310).